Here is a 517-residue protein sequence, read N- to C-terminus: ATP synthase subunit alpha (517 aa).

173–180 (GDRQTGKT) contacts ATP.

This sequence belongs to the ATPase alpha/beta chains family. In terms of assembly, F-type ATPases have 2 components, CF(1) - the catalytic core - and CF(0) - the membrane proton channel. CF(1) has five subunits: alpha(3), beta(3), gamma(1), delta(1), epsilon(1). CF(0) has three main subunits: a(1), b(2) and c(9-12). The alpha and beta chains form an alternating ring which encloses part of the gamma chain. CF(1) is attached to CF(0) by a central stalk formed by the gamma and epsilon chains, while a peripheral stalk is formed by the delta and b chains.

Its subcellular location is the cell inner membrane. The enzyme catalyses ATP + H2O + 4 H(+)(in) = ADP + phosphate + 5 H(+)(out). Functionally, produces ATP from ADP in the presence of a proton gradient across the membrane. The alpha chain is a regulatory subunit. The protein is ATP synthase subunit alpha of Legionella pneumophila (strain Lens).